We begin with the raw amino-acid sequence, 92 residues long: Large ribosomal subunit protein eL43 (92 aa).

Cys-39, Cys-42, Cys-57, and Cys-60 together coordinate Zn(2+).

Belongs to the eukaryotic ribosomal protein eL43 family. In terms of assembly, component of the large ribosomal subunit. Mature ribosomes consist of a small (40S) and a large (60S) subunit. The 40S subunit contains 32 different proteins and 1 molecule of RNA (18S). The 60S subunit contains 45 different proteins and 3 molecules of RNA (25S, 5.8S and 5S). It depends on Zn(2+) as a cofactor.

Its subcellular location is the cytoplasm. Its function is as follows. Component of the ribosome, a large ribonucleoprotein complex responsible for the synthesis of proteins in the cell. The small ribosomal subunit (SSU) binds messenger RNAs (mRNAs) and translates the encoded message by selecting cognate aminoacyl-transfer RNA (tRNA) molecules. The large subunit (LSU) contains the ribosomal catalytic site termed the peptidyl transferase center (PTC), which catalyzes the formation of peptide bonds, thereby polymerizing the amino acids delivered by tRNAs into a polypeptide chain. The nascent polypeptides leave the ribosome through a tunnel in the LSU and interact with protein factors that function in enzymatic processing, targeting, and the membrane insertion of nascent chains at the exit of the ribosomal tunnel. This chain is Large ribosomal subunit protein eL43, found in Candida albicans (strain SC5314 / ATCC MYA-2876) (Yeast).